The following is a 141-amino-acid chain: NADH dehydrogenase [ubiquinone] 1 alpha subcomplex subunit 11 (141 aa).

An N-acetylalanine modification is found at Ala-2. Transmembrane regions (helical) follow at residues 21 to 43 and 58 to 80; these read KAYS…RVTL and QYTF…SAHV.

This sequence belongs to the complex I NDUFA11 subunit family. In terms of assembly, complex I is composed of 45 different subunits.

The protein resides in the mitochondrion inner membrane. Accessory subunit of the mitochondrial membrane respiratory chain NADH dehydrogenase (Complex I), that is believed not to be involved in catalysis. Complex I functions in the transfer of electrons from NADH to the respiratory chain. The immediate electron acceptor for the enzyme is believed to be ubiquinone. This chain is NADH dehydrogenase [ubiquinone] 1 alpha subcomplex subunit 11 (NDUFA11), found in Homo sapiens (Human).